The chain runs to 598 residues: Probable transporter mch1 (598 aa).

The disordered stretch occupies residues M1 to P49. Residues S22–P37 show a composition bias toward low complexity. N-linked (GlcNAc...) asparagine glycosylation occurs at N57. 6 consecutive transmembrane segments (helical) span residues A63–F83, G96–C116, G122–V142, L164–Y184, G202–L222, and V241–F261. The segment at A315–D334 is disordered. Residue N325 is glycosylated (N-linked (GlcNAc...) asparagine). 6 helical membrane-spanning segments follow: residues H355 to I375, I405 to A425, F453 to I473, L486 to W506, G516 to V536, and S565 to W585.

This sequence belongs to the major facilitator superfamily.

It localises to the vacuole membrane. Functionally, probable transporter. The sequence is that of Probable transporter mch1 (mch1) from Neurospora crassa (strain ATCC 24698 / 74-OR23-1A / CBS 708.71 / DSM 1257 / FGSC 987).